The sequence spans 215 residues: Flagellin B1 (215 aa).

Positions 1 to 12 are excised as a propeptide; it reads MSVKNFMNNKKG.

It belongs to the archaeal flagellin family.

It is found in the archaeal flagellum. Functionally, flagellin is the subunit protein which polymerizes to form the filaments of archaeal flagella. This chain is Flagellin B1 (flaB1), found in Methanococcus vannielii (strain ATCC 35089 / DSM 1224 / JCM 13029 / OCM 148 / SB).